The sequence spans 814 residues: MFAKRKPEPAKRRQHNLAQFGLTEIPDDFDPTSGYGDDDGGDSDLEAELAALASGGGQRPKAKPKPKLMPTSDLDKMIADSLRDVSDDDDDENLENDSDLLGELHGIGGLEEEPEAEEAAAEPAASEEEPVQTFLPTTTVDTLGIIKQRLEIYKQAEANAKASGDSGKARRFGRGLKTLQDLHKQAAAGKTINVDDIPPEVSVKPAGDPSPAADESPAPSTPVSQPTRVAPAPPTPTSPPAATPPPAPATPPNPLVAQMRSRQSEYKAAALQYKRSGDTANALQFLKVVKQFDVVVKMCEDGQEVDLSDMPPPPSEFLEFLAKMKGEAAPEVVTAPEPTPAPAPATPPAAAAAAESMLEALQRRLEKYKSVEAAAKAEENTGKARRFGRIVKQYEDAIKQYKAGKPVAYDELPVPPGFGPLPSTEPAPAATPSLPTSPTSPPATASTSAGGTPSGSSATTPTVPRKAAPSPPQPTELTTRVTGNHQKSNLAEQQMKLLLERQKEFKVAAIEAKKAGEIDQAKEYLKIYKGFDSLLNAASSGLPVDLSTLPVPPSQRDNLEASFAIVSAEECDPSDDICEIGVRMEEQLAKQLMMCKNTRDHHKAMGDVAGMNRFENLALTVQKDLDVVRYSKRKGQPLPKFHYEKRNFNIVHCNTDLTDNELEIVVARGINYNVPNPKEVDTYVRVEFPLLNDESFKTKTNVIKDTNSPDYDERFKVDIQRSNRQFQRIFKRHGVKLEIYSRGGFLRSDILIGTVNVKLQPLETKCDIHDTYDLMDGRKQVGGKLEVKVRVRNPILTKQIEHINEKWLVLDAEG.

The segment covering 1–11 (MFAKRKPEPAK) has biased composition (basic and acidic residues). 2 disordered regions span residues 1-136 (MFAK…TFLP) and 157-263 (EANA…RSRQ). A compositionally biased stretch (acidic residues) spans 25 to 47 (IPDDFDPTSGYGDDDGGDSDLEA). The segment covering 73-85 (DLDKMIADSLRDV) has biased composition (basic and acidic residues). Acidic residues-rich tracts occupy residues 86–100 (SDDDDDENLENDSDL) and 110–130 (LEEEPEAEEAAAEPAASEEEP). The segment at 143-201 (LGIIKQRLEIYKQAEANAKASGDSGKARRFGRGLKTLQDLHKQAAAGKTINVDDIPPEV) is DM14 1. The span at 205–230 (PAGDPSPAADESPAPSTPVSQPTRVA) shows a compositional bias: low complexity. Positions 231–254 (PAPPTPTSPPAATPPPAPATPPNP) are enriched in pro residues. 2 DM14 regions span residues 256–314 (VAQM…PPPP) and 358–416 (LEAL…PVPP). Positions 351–378 (AAAAESMLEALQRRLEKYKSVEAAAKAE) form a coiled coil. Positions 414–425 (VPPGFGPLPSTE) are enriched in pro residues. Positions 414–486 (VPPGFGPLPS…LTTRVTGNHQ (73 aa)) are disordered. Residues 426 to 462 (PAPAATPSLPTSPTSPPATASTSAGGTPSGSSATTPT) are compositionally biased toward low complexity. A compositionally biased stretch (polar residues) spans 475–486 (TELTTRVTGNHQ). The DM14 4 stretch occupies residues 495-553 (MKLLLERQKEFKVAAIEAKKAGEIDQAKEYLKIYKGFDSLLNAASSGLPVDLSTLPVPP). Residues 633–772 (RKGQPLPKFH…ETKCDIHDTY (140 aa)) enclose the C2 domain.

It belongs to the CC2D1 family. Interacts (via DM14 domains 1 and 3) with shrb; the interaction is direct and blocks access to the surface involved in shrb polymerization. This interaction may be required for the ESCRT-III complex role in multivesicular body formation.

It localises to the cytoplasm. It is found in the cytosol. The protein localises to the apicolateral cell membrane. The protein resides in the cell cortex. Its subcellular location is the endosome. In terms of biological role, phosphatidyl inositol monophosphate binding protein involved in endosomal protein sorting through regulation of the endosomal sorting required for transport (ESCRT) pathway. Required for full activity of the ESCRT-III complex core component shrb/shrub, probably by preventing its inappropriate polymerisation. Required, but not essential, for the efficient generation of intraluminal vesicles (ILVs) in multivesicular bodies (MVBs). Involved in a late stage of the endosomal pathway targeting transmembrane proteins of the plasma membrane for lysosomal degradation. Plays a critical role in regulation of multiple signal transduction pathways, including the Notch and BMP/decapentaplegic (dpp) signaling pathways, through targeting of membrane bound receptors to multivesicular bodies, isolating them from the cytoplasm and targeting them for lysosomal degradation. Involved in targeting N/Notch for endosomal degradation, negatively regulating the Notch signaling pathway. Regulates Notch signaling in imaginal disk cells and follicle cells during oogenesis and multiple developmental processes, including development of wings, veins, legs, eyes and bristles. Restricts the activity of Notch to the dorsoventral (D/V) boundary of the wing imaginal disk. In external sensory organ development regulates Notch signaling during asymmetric cell division and differentiation of sensory organ precursor cells. May be involved in regulation of apoptosis and cell growth independent of Notch signaling. Involved in targeting tkv for endosomal degradation, negatively regulating the BMP/decapentaplegic (dpp) signaling pathway. Regulates the BMP/dpp signaling pathway in follicle cells during oogenesis, but not in imaginal disk cells during wing development. May be involved in differentiation or morphogenesis of peripodial epithelial cells in the developing imaginal disk. Involved in abscission of germline cells during oogenesis. This is Coiled-coil and C2 domain-containing protein 1-like from Drosophila pseudoobscura pseudoobscura (Fruit fly).